A 164-amino-acid polypeptide reads, in one-letter code: UPF0114 protein Spro_2386 (164 aa).

The next 3 helical transmembrane spans lie at 15–35 (LLAPVYFGLSLALLALSIKFF), 53–73 (LVLTLLSLIDMALVGGLLVMV), and 136–156 (LMWYVIIHLTFVLSAFVMGYL).

It belongs to the UPF0114 family.

It is found in the cell membrane. The protein is UPF0114 protein Spro_2386 of Serratia proteamaculans (strain 568).